The following is a 29-amino-acid chain: DQGTACTGEHAHSFCLNGGTCRHIQQLGE.

One can recognise an EGF-like domain in the interval 2–29; the sequence is QGTACTGEHAHSFCLNGGTCRHIQQLGE. Cys-6 and Cys-21 are disulfide-bonded.

It is found in the secreted. It localises to the nematocyst. In terms of biological role, has both toxic and EGF activity. This is Toxin Bcg III 15.67 from Bunodosoma cangicum (Sea anemone).